The primary structure comprises 620 residues: Aspartic protease 1 (620 aa).

The Cytoplasmic portion of the chain corresponds to 1-110; that stretch reads MSPSSRFRNL…LGKAVGLSTS (110 aa). Positions 1 to 258 are excised as a propeptide; that stretch reads MSPSSRFRNL…SKKDDGNLSG (258 aa). The interval 27–31 is important for proper cellular trafficking; sequence YASLL. A helical; Signal-anchor for type II membrane protein transmembrane segment spans residues 111–131; sequence VICVVALFGIVCLCLYGLVNF. Residues 132-620 lie on the Lumenal side of the membrane; sequence SFTSVETSPL…KQIGFARLKN (489 aa). A disordered region spans residues 138–174; sequence TSPLDDPRNSPVMGELGNPQASTPSSARADTPARHDR. Residues 156-165 are compositionally biased toward polar residues; the sequence is PQASTPSSAR. One can recognise a Peptidase A1 domain in the interval 275-616; it reads YYTEIYVGSP…DYDNKQIGFA (342 aa). Residues aspartate 293 and aspartate 476 contribute to the active site. Cysteine 513 and cysteine 550 are oxidised to a cystine.

This sequence belongs to the peptidase A1 family. Proteolytically cleaved into the soluble active mature form by, at least, cysteine protease CPL. Undergoes at least four processing steps; the first cleavage removes the propeptide resulting in the production of a soluble 45 kDa protein, which is further processed into a 35 kDa form followed by an additional processing into the final active 30 kDa form.

Its subcellular location is the membrane. It is found in the vacuole. Its function is as follows. Aspartyl protease which is dispensable for protein degradation in the vacuolar compartment (VAC) or for tachyzoite and bradyzoite viability. The polypeptide is Aspartic protease 1 (Toxoplasma gondii).